A 554-amino-acid polypeptide reads, in one-letter code: MMLSRAKPAVGNEVQQIDKKKKKGKKVPRLDELLAQRDFTGAITLLEFKRQVGESEEDTELWIGYCSFHLGDYKRSLEVFKALSQQEGCNPDVWVNLACTSFFLGMYKEADEAANKAPKSRLQNRLLFHLAHKFNDEKRLMVFHQNLQDVIEDQLSLASIHYMRSHYQEAIDIYKRILLENRDFLALNVYVALCYYKLDYYDVSQEVLAVYLQQVPDSTIALNLKACNHFRLYNGKAAEAELKGLMDSTSSPIEFAKELIKHNLVVFRAGEGALQVLPPLVDVIPEARLNLVIYYLRQDDVQEAFNLIKDLEPSTPQEYILKGVVNASLGQELGSRDHLKIAQQFFQLVGGSASECDTIPGRQCMASCFFLLRQFDDVLIYLNSIKSYFYNDDTFNFNYAQAKAAVGNYKEAEEVFLLIQNEKIKNDYTYLSWLARCYIMNKKPRMAWELYLKMETSGESFSLLQLIANDCYKMGHFYYAAKAFDILERLDPSPEYWEGKRGACVGIFQMILAGREPKETLREVLNLLRSTGNTQVEYIIRILKKWGKENRVPV.

The interval 1-23 is disordered; the sequence is MMLSRAKPAVGNEVQQIDKKKKK. 4 TPR repeats span residues 57–90, 92–125, 151–184, and 468–501; these read EDTE…EGCN, DVWV…LQNR, IEDQ…NRDF, and ANDC…EGKR.

It belongs to the IFT56 family. In terms of assembly, component of the IFT complex B.

It localises to the cell projection. It is found in the cilium. Functionally, component of the intraflagellar transport (IFT) complex B required for transport of proteins in the motile cilium. Required for transport of specific ciliary cargo proteins related to motility, while it is neither required for IFT complex B assembly or motion nor for cilium assembly. Plays a key role in maintaining the integrity of the IFT complex B and the proper ciliary localization of the IFT complex B components. Essential for maintaining proper microtubule organization within the ciliary axoneme. In Xenopus tropicalis (Western clawed frog), this protein is Intraflagellar transport protein 56.